Reading from the N-terminus, the 146-residue chain is 3-dehydroquinate dehydratase (146 aa).

Tyr-23 acts as the Proton acceptor in catalysis. Substrate-binding residues include Asn-74, His-80, and Asp-87. His-100 (proton donor) is an active-site residue. Substrate is bound by residues 101–102 (IS) and Arg-111.

This sequence belongs to the type-II 3-dehydroquinase family. In terms of assembly, homododecamer.

It carries out the reaction 3-dehydroquinate = 3-dehydroshikimate + H2O. It participates in metabolic intermediate biosynthesis; chorismate biosynthesis; chorismate from D-erythrose 4-phosphate and phosphoenolpyruvate: step 3/7. Its function is as follows. Catalyzes a trans-dehydration via an enolate intermediate. This Bacillus mycoides (strain KBAB4) (Bacillus weihenstephanensis) protein is 3-dehydroquinate dehydratase.